The primary structure comprises 93 residues: uncharacterized protein (93 aa).

The interval 35–72 (KSVPPPTPPKPVKKTPSPTLPKPSKQKQEPQVEVNEDR) is disordered. The segment covering 60–72 (QKQEPQVEVNEDR) has biased composition (basic and acidic residues).

This is an uncharacterized protein from Ostreid herpesvirus 1 (isolate France) (OsHV-1).